The following is a 64-amino-acid chain: Large ribosomal subunit protein bL35 (64 aa).

The interval 1–54 is disordered; sequence MPKIKSNSGAAKRFKKTAHGFKHKQSFRSHILTKKSTKRKRQLRGMKQIHDADK. Over residues 12 to 44 the composition is skewed to basic residues; the sequence is KRFKKTAHGFKHKQSFRSHILTKKSTKRKRQLR.

This sequence belongs to the bacterial ribosomal protein bL35 family.

This Chromohalobacter salexigens (strain ATCC BAA-138 / DSM 3043 / CIP 106854 / NCIMB 13768 / 1H11) protein is Large ribosomal subunit protein bL35.